The primary structure comprises 1080 residues: Carbamoyl phosphate synthase large chain (1080 aa).

Residues 1–403 (MPKRTDLRTI…SLQKAVRGLE (403 aa)) form a carboxyphosphate synthetic domain region. The ATP site is built by Arg-129, Arg-169, Gly-175, Gly-176, Glu-208, Val-210, Glu-215, Gly-241, Val-242, His-243, Gln-285, and Glu-299. One can recognise an ATP-grasp 1 domain in the interval 133 to 328 (RVAMQEIGLE…IAKIAAKLAV (196 aa)). 3 residues coordinate Mg(2+): Gln-285, Glu-299, and Asn-301. Residues Gln-285, Glu-299, and Asn-301 each coordinate Mn(2+). The tract at residues 404 to 554 (TGKVGLEPTG…YSTYEEECEA (151 aa)) is oligomerization domain. Residues 555–942 (APSDRRKIMI…AFARAQEAGD (388 aa)) form a carbamoyl phosphate synthetic domain region. The 198-residue stretch at 679-876 (QRLVQQLGLR…LAKIAARCMT (198 aa)) folds into the ATP-grasp 2 domain. Positions 715, 754, 756, 761, 787, 788, 789, 790, 830, and 847 each coordinate ATP. Gln-830, Glu-847, and Asn-849 together coordinate Mg(2+). 3 residues coordinate Mn(2+): Gln-830, Glu-847, and Asn-849. One can recognise an MGS-like domain in the interval 943–1080 (IRAPQPGRAF…LQELHKELQV (138 aa)). The interval 943 to 1080 (IRAPQPGRAF…LQELHKELQV (138 aa)) is allosteric domain.

The protein belongs to the CarB family. As to quaternary structure, composed of two chains; the small (or glutamine) chain promotes the hydrolysis of glutamine to ammonia, which is used by the large (or ammonia) chain to synthesize carbamoyl phosphate. Tetramer of heterodimers (alpha,beta)4. The cofactor is Mg(2+). Mn(2+) serves as cofactor.

The enzyme catalyses hydrogencarbonate + L-glutamine + 2 ATP + H2O = carbamoyl phosphate + L-glutamate + 2 ADP + phosphate + 2 H(+). It carries out the reaction hydrogencarbonate + NH4(+) + 2 ATP = carbamoyl phosphate + 2 ADP + phosphate + 2 H(+). The protein operates within amino-acid biosynthesis; L-arginine biosynthesis; carbamoyl phosphate from bicarbonate: step 1/1. Its pathway is pyrimidine metabolism; UMP biosynthesis via de novo pathway; (S)-dihydroorotate from bicarbonate: step 1/3. Large subunit of the glutamine-dependent carbamoyl phosphate synthetase (CPSase). CPSase catalyzes the formation of carbamoyl phosphate from the ammonia moiety of glutamine, carbonate, and phosphate donated by ATP, constituting the first step of 2 biosynthetic pathways, one leading to arginine and/or urea and the other to pyrimidine nucleotides. The large subunit (synthetase) binds the substrates ammonia (free or transferred from glutamine from the small subunit), hydrogencarbonate and ATP and carries out an ATP-coupled ligase reaction, activating hydrogencarbonate by forming carboxy phosphate which reacts with ammonia to form carbamoyl phosphate. The protein is Carbamoyl phosphate synthase large chain of Xylella fastidiosa (strain Temecula1 / ATCC 700964).